Consider the following 320-residue polypeptide: Reticulocalbin-2 (320 aa).

The N-terminal stretch at 1–25 is a signal peptide; it reads MRLGPRPAALGLLLPLLLYAAVAGA. 2 EF-hand domains span residues 64-99 and 100-135; these read EQQR…SFKH and YAMQ…RVID. Positions 77, 79, 81, 88, 113, 115, 117, and 124 each coordinate Ca(2+). Position 140 is a phosphothreonine (Thr-140). 4 consecutive EF-hand domains span residues 150 to 185, 189 to 224, 230 to 265, and 266 to 301; these read FRQL…HPEE, MTEF…DPTA, WILV…NNQG, and IAQE…FLTS. Positions 167, 176, 202, 204, 206, 213, 243, 245, 247, 249, 254, 279, 281, 283, 285, and 290 each coordinate Ca(2+). The short motif at 317 to 320 is the Prevents secretion from ER element; sequence HDEL.

Belongs to the CREC family.

Its subcellular location is the endoplasmic reticulum lumen. Not known. Binds calcium. The polypeptide is Reticulocalbin-2 (Rcn2) (Mus musculus (Mouse)).